A 612-amino-acid polypeptide reads, in one-letter code: Baculoviral IAP repeat-containing protein 2 (612 aa).

The stretch at 46–113 (ELYRMSTYSA…RQFYPSCSFV (68 aa)) is one BIR 1 repeat. An Omega-N-methylarginine modification is found at Arg143. Ser153 is subject to Phosphoserine. BIR repeat units follow at residues 177-243 (EEAR…CPFL) and 262-329 (HSAR…CEFL). Zn(2+) is bound by residues Cys299, Cys302, His319, and Cys326. Positions 447 to 537 (MASGDLSLIR…TLYENLFVEK (91 aa)) constitute a CARD domain. The RING-type zinc-finger motif lies at 565–600 (CKVCMDREVSIVFIPCGHLVVCQECAPSLRKCPICR).

Belongs to the IAP family. Interacts with DIABLO/SMAC and with PRSS25; these interactions inhibit apoptotic suppressor activity. Interacts with CASP9. Interacts (via BIR domains) with TRAF2; the interaction is required for IKBKE ubiquitination. Interacts with E2F1, RIPK1, RIPK2, RIPK3, RIPK4, BIRC5/survivin and USP19. Interacts with HSP90AB1. Interacts with several death receptors, inclusing FAS, TNFRSF10A and TNFRSF10B. Recruited to TNFRSF10B in the absence of receptor stimulation. When TNFRSF10B is stimulated, further recruited to the receptor and cleaved by caspases. Proteolytic fragments remain associated with TNFRSF10B. Auto-ubiquitinated and degraded by the proteasome in apoptotic cells. Post-translationally, upon stimulation of death receptors, including TNFRSF10B, recruited to receptors and cleaved by caspases. Proteolytic fragments remain associated with the receptors. This cleavage presumably inactivates the protein. Expressed in heart, brain, spleen, lung, liver, skeletal muscle, kidney and testis.

It is found in the cytoplasm. The protein localises to the nucleus. It catalyses the reaction S-ubiquitinyl-[E2 ubiquitin-conjugating enzyme]-L-cysteine + [acceptor protein]-L-lysine = [E2 ubiquitin-conjugating enzyme]-L-cysteine + N(6)-ubiquitinyl-[acceptor protein]-L-lysine.. Its activity is regulated as follows. The CARD domain inhibits the activation of E3 ubiquitin ligase activity by preventing RING domain dimerization and E2 ubiquitin donor binding and activation. The CARD domain-mediated autoinhibition of the E3 ubiquitin-protein ligase activity suppresses cell proliferation and migration. USP19 regulates the stability of BIRC2/c-IAP1 by preventing its ubiquitination. Its function is as follows. Multi-functional protein which regulates not only caspases and apoptosis, but also modulates inflammatory signaling and immunity, mitogenic kinase signaling, and cell proliferation, as well as cell invasion and metastasis. Acts as an E3 ubiquitin-protein ligase regulating NF-kappa-B signaling and regulates both canonical and non-canonical NF-kappa-B signaling by acting in opposite directions: acts as a positive regulator of the canonical pathway and suppresses constitutive activation of non-canonical NF-kappa-B signaling. The target proteins for its E3 ubiquitin-protein ligase activity include: RIPK1, RIPK2, RIPK3, RIPK4, CASP3, CASP7, CASP8, TRAF2, DIABLO/SMAC, MAP3K14/NIK, MAP3K5/ASK1, IKBKG/NEMO, IKBKE and MXD1/MAD1. Can also function as an E3 ubiquitin-protein ligase of the NEDD8 conjugation pathway, targeting effector caspases for neddylation and inactivation. Acts as an important regulator of innate immune signaling via regulation of Toll-like receptors (TLRs), Nodlike receptors (NLRs) and RIG-I like receptors (RLRs), collectively referred to as pattern recognition receptors (PRRs). Protects cells from spontaneous formation of the ripoptosome, a large multi-protein complex that has the capability to kill cancer cells in a caspase-dependent and caspase-independent manner. Suppresses ripoptosome formation by ubiquitinating RIPK1 and CASP8. Can stimulate the transcriptional activity of E2F1. Plays a role in the modulation of the cell cycle. In Mus musculus (Mouse), this protein is Baculoviral IAP repeat-containing protein 2 (Birc2).